A 210-amino-acid polypeptide reads, in one-letter code: VSNSSSQIILKWKPPSDPNGNITHYLVFWERQAEDSELFELDYCLKGLKLPSRTWSPPFESEDSQKHNQSEYEDSAGECCSCPKTDSQILKELEESSFRKTFEDYLHNVVFVPRKTSSGTGAEDPRPSRKRRSLGDVGNVTVAVPTVAAFPNTSSTSTPTSPEEHRPFEKVVNKESLVISGLRHFTGYRIELQACNQDTPEERCSVAAYV.

One can recognise a Fibronectin type-III domain in the interval 1–96 (VSNSSSQIIL…SQILKELEES (96 aa)). Asn3, Asn21, and Asn68 each carry an N-linked (GlcNAc...) asparagine glycan. The interval 55–78 (WSPPFESEDSQKHNQSEYEDSAGE) is disordered. Residues 103-111 (EDYLHNVVF) are insulin-binding. The disordered stretch occupies residues 116-169 (TSSGTGAEDPRPSRKRRSLGDVGNVTVAVPTVAAFPNTSSTSTPTSPEEHRPFE). Residues 133 to 210 (SLGDVGNVTV…EERCSVAAYV (78 aa)) lie on the Extracellular side of the membrane. Low complexity predominate over residues 137-161 (VGNVTVAVPTVAAFPNTSSTSTPTS). N-linked (GlcNAc...) asparagine glycosylation is found at Asn139 and Asn152. A disulfide bridge connects residues Cys195 and Cys204.

This sequence belongs to the protein kinase superfamily. Tyr protein kinase family. Insulin receptor subfamily. As to quaternary structure, tetramer of 2 alpha and 2 beta chains linked by disulfide bonds. The alpha chains carry the insulin-binding regions, while the beta chains carry the kinase domain. Forms a hybrid receptor with IGF1R, the hybrid is a tetramer consisting of 1 alpha chain and 1 beta chain of INSR and 1 alpha chain and 1 beta chain of IGF1R. Interacts with SORBS1 but dissociates from it following insulin stimulation. Binds SH2B2. Activated form of INSR interacts (via phosphorylated Tyrosine) with the PTB/PID domains of IRS1 and SHC1. The sequences surrounding the phosphorylated NPXY motif contribute differentially to either IRS1 or SHC1 recognition. Interacts (via tyrosines in the C-terminus) with IRS2 (via PTB domain and 591-786 AA); the 591-786 would be the primary anchor of IRS2 to INSR while the PTB domain would have a stabilizing action on the interaction with INSR. Interacts with the SH2 domains of the 85 kDa regulatory subunit of PI3K (PIK3R1) in vitro, when autophosphorylated on tyrosine residues. Interacts with SOCS7. Interacts with SOCS3. Interacts with SOCS1. Interacts with CAV2 (tyrosine-phosphorylated form); the interaction is increased with 'Tyr-27'phosphorylation of CAV2. Interacts with ARRB2. Interacts with GRB10; this interaction blocks the association between IRS1/IRS2 and INSR, significantly reduces insulin-stimulated tyrosine phosphorylation of IRS1 and IRS2 and thus decreases insulin signaling. Interacts with GRB7. Interacts with PDPK1. Interacts with GRB14 (via BPS domain). Interacts (via subunit alpha) with ENPP1 (via 485-599 AA); this interaction blocks autophosphorylation. Interacts with PTPRE. Interacts with STAT5B (via SH2 domain). Interacts with PTPRF. Interacts with ATIC; ATIC together with PRKAA2/AMPK2 and HACD3/PTPLAD1 is proposed to be part of a signaling netwok regulating INSR autophosphorylation and endocytosis. Interacts with the insulin receptor SORL1; this interaction strongly increases its surface exposure, hence strengthens insulin signal reception. Interacts (tyrosine phosphorylated) with CCDC88A/GIV (via SH2-like region); binding requires autophosphorylation of the INSR C-terminal region. Interacts with GNAI3; the interaction is probably mediated by CCDC88A/GIV. Interacts with LMBRD1. Interacts (in response to insulin stimulation) with NCK1; this interaction may recruit PTPN1 to mediate INSR dephosphorylation. In terms of processing, after being transported from the endoplasmic reticulum to the Golgi apparatus, the single glycosylated precursor is further glycosylated and then cleaved, followed by its transport to the plasma membrane. Post-translationally, autophosphorylated on tyrosine residues in response to insulin. Dephosphorylated by PTPN1, PTPRE and PTPRF. Dephosphorylated by PTPN2; down-regulates insulin-induced signaling. S-nitrosylation by BLVRB inhibits the receptor tyrosine kinase, thereby inhibiting insulin signaling.

It localises to the cell membrane. The protein resides in the late endosome. Its subcellular location is the lysosome. The catalysed reaction is L-tyrosyl-[protein] + ATP = O-phospho-L-tyrosyl-[protein] + ADP + H(+). With respect to regulation, activated in response to insulin. Autophosphorylation activates the kinase activity. PTPN1, PTPRE and PTPRF dephosphorylate important tyrosine residues, thereby reducing INSR activity. Inhibited by ENPP1. GRB10 and GRB14 inhibit the catalytic activity of the INSR, they block access of substrates to the activated receptor. SOCS1 and SOCS3 act as negative regulators of INSR activity, they bind to the activated INRS and interfere with the phosphorylation of INSR substrates. Its function is as follows. Receptor tyrosine kinase which mediates the pleiotropic actions of insulin. Binding of insulin leads to phosphorylation of several intracellular substrates, including, insulin receptor substrates (IRS1, 2, 3, 4), SHC, GAB1, CBL and other signaling intermediates. Each of these phosphorylated proteins serve as docking proteins for other signaling proteins that contain Src-homology-2 domains (SH2 domain) that specifically recognize different phosphotyrosine residues, including the p85 regulatory subunit of PI3K and SHP2. Phosphorylation of IRSs proteins lead to the activation of two main signaling pathways: the PI3K-AKT/PKB pathway, which is responsible for most of the metabolic actions of insulin, and the Ras-MAPK pathway, which regulates expression of some genes and cooperates with the PI3K pathway to control cell growth and differentiation. Binding of the SH2 domains of PI3K to phosphotyrosines on IRS1 leads to the activation of PI3K and the generation of phosphatidylinositol-(3, 4, 5)-triphosphate (PIP3), a lipid second messenger, which activates several PIP3-dependent serine/threonine kinases, such as PDPK1 and subsequently AKT/PKB. The net effect of this pathway is to produce a translocation of the glucose transporter SLC2A4/GLUT4 from cytoplasmic vesicles to the cell membrane to facilitate glucose transport. Moreover, upon insulin stimulation, activated AKT/PKB is responsible for: anti-apoptotic effect of insulin by inducing phosphorylation of BAD; regulates the expression of gluconeogenic and lipogenic enzymes by controlling the activity of the winged helix or forkhead (FOX) class of transcription factors. Another pathway regulated by PI3K-AKT/PKB activation is mTORC1 signaling pathway which regulates cell growth and metabolism and integrates signals from insulin. AKT mediates insulin-stimulated protein synthesis by phosphorylating TSC2 thereby activating mTORC1 pathway. The Ras/RAF/MAP2K/MAPK pathway is mainly involved in mediating cell growth, survival and cellular differentiation of insulin. Phosphorylated IRS1 recruits GRB2/SOS complex, which triggers the activation of the Ras/RAF/MAP2K/MAPK pathway. In addition to binding insulin, the insulin receptor can bind insulin-like growth factors (IGFI and IGFII). When present in a hybrid receptor with IGF1R, binds IGF1. In adipocytes, inhibits lipolysis. This Macaca mulatta (Rhesus macaque) protein is Insulin receptor (INSR).